Here is a 269-residue protein sequence, read N- to C-terminus: Cytochrome c oxidase subunit 3 (269 aa).

7 helical membrane passes run 21-41 (PWPM…GLTM), 45-65 (IGNM…SVFW), 90-110 (GFLL…WAYF), 138-160 (PLLN…HALI), 167-187 (ALSG…CQYI), 205-225 (FYAG…MLII), and 247-267 (ILYC…FYWW).

It belongs to the cytochrome c oxidase subunit 3 family. In terms of assembly, component of the cytochrome c oxidase (complex IV, CIV), a multisubunit enzyme composed of a catalytic core of 3 subunits and several supernumerary subunits. The complex exists as a monomer or a dimer and forms supercomplexes (SCs) in the inner mitochondrial membrane with ubiquinol-cytochrome c oxidoreductase (cytochrome b-c1 complex, complex III, CIII).

The protein localises to the mitochondrion inner membrane. The catalysed reaction is 4 Fe(II)-[cytochrome c] + O2 + 8 H(+)(in) = 4 Fe(III)-[cytochrome c] + 2 H2O + 4 H(+)(out). Component of the cytochrome c oxidase, the last enzyme in the mitochondrial electron transport chain which drives oxidative phosphorylation. The respiratory chain contains 3 multisubunit complexes succinate dehydrogenase (complex II, CII), ubiquinol-cytochrome c oxidoreductase (cytochrome b-c1 complex, complex III, CIII) and cytochrome c oxidase (complex IV, CIV), that cooperate to transfer electrons derived from NADH and succinate to molecular oxygen, creating an electrochemical gradient over the inner membrane that drives transmembrane transport and the ATP synthase. Cytochrome c oxidase is the component of the respiratory chain that catalyzes the reduction of oxygen to water. Electrons originating from reduced cytochrome c in the intermembrane space (IMS) are transferred via the dinuclear copper A center (CU(A)) of subunit 2 and heme A of subunit 1 to the active site in subunit 1, a binuclear center (BNC) formed by heme A3 and copper B (CU(B)). The BNC reduces molecular oxygen to 2 water molecules using 4 electrons from cytochrome c in the IMS and 4 protons from the mitochondrial matrix. The chain is Cytochrome c oxidase subunit 3 (COX3) from Candida glabrata (strain ATCC 2001 / BCRC 20586 / JCM 3761 / NBRC 0622 / NRRL Y-65 / CBS 138) (Yeast).